Here is a 320-residue protein sequence, read N- to C-terminus: Methionyl-tRNA formyltransferase (320 aa).

111–114 lines the (6S)-5,6,7,8-tetrahydrofolate pocket; that stretch reads SLLP.

The protein belongs to the Fmt family.

It carries out the reaction L-methionyl-tRNA(fMet) + (6R)-10-formyltetrahydrofolate = N-formyl-L-methionyl-tRNA(fMet) + (6S)-5,6,7,8-tetrahydrofolate + H(+). Its function is as follows. Attaches a formyl group to the free amino group of methionyl-tRNA(fMet). The formyl group appears to play a dual role in the initiator identity of N-formylmethionyl-tRNA by promoting its recognition by IF2 and preventing the misappropriation of this tRNA by the elongation apparatus. The polypeptide is Methionyl-tRNA formyltransferase (Pediococcus pentosaceus (strain ATCC 25745 / CCUG 21536 / LMG 10740 / 183-1w)).